We begin with the raw amino-acid sequence, 300 residues long: GTPase Era (300 aa).

One can recognise an Era-type G domain in the interval 8-176; the sequence is RCGYVAIVGR…EAQIAKHLPE (169 aa). Positions 16–23 are G1; that stretch reads GRPNVGKS. 16 to 23 is a binding site for GTP; sequence GRPNVGKS. The tract at residues 42–46 is G2; it reads QTTRH. Positions 63 to 66 are G3; it reads DTPG. GTP is bound by residues 63 to 67 and 125 to 128; these read DTPGM and NKTD. Residues 125-128 form a G4 region; the sequence is NKTD. Residues 155-157 form a G5 region; the sequence is ISA. The 85-residue stretch at 199–283 folds into the KH type-2 domain; it reads VREKIMRQLG…MLNLWVKVKG (85 aa).

This sequence belongs to the TRAFAC class TrmE-Era-EngA-EngB-Septin-like GTPase superfamily. Era GTPase family. In terms of assembly, monomer.

Its subcellular location is the cytoplasm. The protein localises to the cell inner membrane. An essential GTPase that binds both GDP and GTP, with rapid nucleotide exchange. Plays a role in 16S rRNA processing and 30S ribosomal subunit biogenesis and possibly also in cell cycle regulation and energy metabolism. This is GTPase Era from Pseudomonas putida (strain ATCC 700007 / DSM 6899 / JCM 31910 / BCRC 17059 / LMG 24140 / F1).